A 324-amino-acid polypeptide reads, in one-letter code: Dolichyl-phosphate beta-glucosyltransferase (324 aa).

At 1 to 7 (MATLLLQ) the chain is on the lumenal side. A helical transmembrane segment spans residues 8–28 (LLGLGVALAAAALILVSIVAF). The Cytoplasmic portion of the chain corresponds to 29–324 (ITATKMPPCY…WRLKQTRKAS (296 aa)).

Belongs to the glycosyltransferase 2 family.

It localises to the endoplasmic reticulum membrane. The enzyme catalyses a di-trans,poly-cis-dolichyl phosphate + UDP-alpha-D-glucose = a di-trans,poly-cis-dolichyl beta-D-glucosyl phosphate + UDP. It functions in the pathway protein modification; protein glycosylation. Its function is as follows. Dolichyl-phosphate beta-glucosyltransferase that operates in the biosynthetic pathway of dolichol-linked oligosaccharides, the glycan precursors employed in protein asparagine (N)-glycosylation. The assembly of dolichol-linked oligosaccharides begins on the cytosolic side of the endoplasmic reticulum membrane and finishes in its lumen. The sequential addition of sugars to dolichol pyrophosphate produces dolichol-linked oligosaccharides containing fourteen sugars, including two GlcNAcs, nine mannoses and three glucoses. Once assembled, the oligosaccharide is transferred from the lipid to nascent proteins by oligosaccharyltransferases. Dolichyl-phosphate beta-glucosyltransferase produces dolichyl beta-D-glucosyl phosphate/Dol-P-Glc, the glucose donor substrate used sequentially by ALG6, ALG8 and ALG10 to add glucose residues on top of the Man(9)GlcNAc(2)-PP-Dol structure. These are the three last steps in the biosynthetic pathway of dolichol-linked oligosaccharides to produce Glc(3)Man(9)GlcNAc(2)-PP-Dol. The enzyme is most probably active on the cytoplasmic side of the endoplasmic reticulum while its product Dol-P-Glc is the substrate for ALG6, ALG8 and ALG11 in the lumen of the endoplasmic reticulum. This chain is Dolichyl-phosphate beta-glucosyltransferase, found in Mus musculus (Mouse).